The sequence spans 894 residues: Exocyst complex component 2 (894 aa).

The 85-residue stretch at 5–89 (PVVTGLSPKE…GTSTVQFRAY (85 aa)) folds into the IPT/TIG domain. Positions 398-413 (HTSKDSGAQEKAKNRD) are enriched in basic and acidic residues. Positions 398–417 (HTSKDSGAQEKAKNRDSSQA) are disordered.

This sequence belongs to the SEC5 family. In terms of assembly, the exocyst complex is composed of Sec3/Exoc1, Sec5/Exoc2, Sec6/Exoc3, Sec8/Exoc4, Sec10/Exoc5, Sec15/Exoc6, Exo70/Exoc7 and Exo84/Exoc8.

Its function is as follows. Component of the exocyst complex involved in the docking of exocytic vesicles with fusion sites on the plasma membrane. The chain is Exocyst complex component 2 from Drosophila melanogaster (Fruit fly).